A 202-amino-acid polypeptide reads, in one-letter code: Small ribosomal subunit protein uS4 (202 aa).

The tract at residues 15 to 42 (LGDLPGLTRKAAKRSYPPGQHGQARRKR) is disordered. The S4 RNA-binding domain occupies 90-152 (NRLDNVCFRL…KCSKQLAEGN (63 aa)).

It belongs to the universal ribosomal protein uS4 family. As to quaternary structure, part of the 30S ribosomal subunit. Contacts protein S5. The interaction surface between S4 and S5 is involved in control of translational fidelity.

Functionally, one of the primary rRNA binding proteins, it binds directly to 16S rRNA where it nucleates assembly of the body of the 30S subunit. With S5 and S12 plays an important role in translational accuracy. This Synechococcus sp. (strain WH7803) protein is Small ribosomal subunit protein uS4.